The chain runs to 142 residues: ATP synthase F(0) complex subunit C3, mitochondrial (142 aa).

Residues 1–67 (MFACAKLACT…REFQTSAISR (67 aa)) constitute a mitochondrion transit peptide. The helical transmembrane segment at 83–103 (VGVAGSGAGIGTVFGSLIIGY) threads the bilayer. At lysine 110 the chain carries N6,N6,N6-trimethyllysine. The chain crosses the membrane as a helical span at residues 118–138 (ILGFALSEAMGLFCLMVAFLI).

This sequence belongs to the ATPase C chain family. In terms of assembly, F-type ATPases have 2 components, CF(1) - the catalytic core - and CF(0) - the membrane proton channel. CF(1) has five subunits: alpha(3), beta(3), gamma(1), delta(1), epsilon(1). CF(0) has three main subunits: a, b and c. Interacts with TMEM70 and TMEM242. In terms of processing, trimethylated by ATPSCKMT at Lys-110. Methylation is required for proper incorporation of the C subunit into the ATP synthase complex and mitochondrial respiration.

Its subcellular location is the mitochondrion membrane. Mitochondrial membrane ATP synthase (F(1)F(0) ATP synthase or Complex V) produces ATP from ADP in the presence of a proton gradient across the membrane which is generated by electron transport complexes of the respiratory chain. F-type ATPases consist of two structural domains, F(1) - containing the extramembraneous catalytic core and F(0) - containing the membrane proton channel, linked together by a central stalk and a peripheral stalk. During catalysis, ATP synthesis in the catalytic domain of F(1) is coupled via a rotary mechanism of the central stalk subunits to proton translocation. Part of the complex F(0) domain. A homomeric c-ring of probably 10 subunits is part of the complex rotary element. The polypeptide is ATP synthase F(0) complex subunit C3, mitochondrial (Pongo abelii (Sumatran orangutan)).